The sequence spans 366 residues: Glucose 1-dehydrogenase (366 aa).

Cys39 is a Zn(2+) binding site. A substrate-binding site is contributed by Thr41. His66 and Glu67 together coordinate Zn(2+). Asn89 provides a ligand contact to substrate. Positions 93, 96, 99, and 107 each coordinate Zn(2+). Glu114, Gln150, and Asp154 together coordinate substrate. A Zn(2+)-binding site is contributed by Gln150. NADP(+) contacts are provided by residues 189–192, 211–213, 277–279, 305–307, and Lys354; these read TGPI, NRR, FGF, and LVN. Asn307 contributes to the substrate binding site.

It belongs to the zinc-containing alcohol dehydrogenase family. Glucose 1-dehydrogenase subfamily. Homotetramer. Zn(2+) is required as a cofactor.

It carries out the reaction D-glucose + NAD(+) = D-glucono-1,5-lactone + NADH + H(+). It catalyses the reaction D-glucose + NADP(+) = D-glucono-1,5-lactone + NADPH + H(+). The enzyme catalyses D-galactose + NAD(+) = D-galactono-1,4-lactone + NADH + H(+). The catalysed reaction is D-galactose + NADP(+) = D-galactono-1,5-lactone + NADPH + H(+). It carries out the reaction an aldopyranose + NAD(+) = aldono-1,5-lactone + NADH + H(+). It catalyses the reaction an aldopyranose + NADP(+) = aldono-1,5-lactone + NADPH + H(+). Its activity is regulated as follows. Inhibited by EDTA in vitro. In terms of biological role, catalyzes the NAD(P)(+)-dependent oxidation of D-glucose to D-gluconate via gluconolactone. Displays broad substrate specificity since it is able to catalyze the oxidation of a number of alternative aldose sugars, such as D-galactose, D-xylose and L-arabinose, to the corresponding glyconate. Can utilize both NAD(+) and NADP(+) as electron acceptor. Physiologically, seems to be involved in the degradation of both glucose and galactose through a non-phosphorylative variant of the Entner-Doudoroff pathway. The protein is Glucose 1-dehydrogenase of Saccharolobus solfataricus (Sulfolobus solfataricus).